The sequence spans 438 residues: 23S rRNA (uracil(1939)-C(5))-methyltransferase RlmD (438 aa).

The region spanning 10–69 (KASVNTKHLSVDVVRLDHNSAGIAFVDKKPVFIEGALPEEQAIIQFIEQKKQYSRAKLIK) is the TRAM domain. The [4Fe-4S] cluster site is built by Cys-82, Cys-88, Cys-91, and Cys-169. Residues Gln-272, Phe-301, Asn-306, Glu-322, Asn-349, and Asp-370 each contribute to the S-adenosyl-L-methionine site. The active-site Nucleophile is Cys-396.

This sequence belongs to the class I-like SAM-binding methyltransferase superfamily. RNA M5U methyltransferase family. RlmD subfamily.

It carries out the reaction uridine(1939) in 23S rRNA + S-adenosyl-L-methionine = 5-methyluridine(1939) in 23S rRNA + S-adenosyl-L-homocysteine + H(+). In terms of biological role, catalyzes the formation of 5-methyl-uridine at position 1939 (m5U1939) in 23S rRNA. The sequence is that of 23S rRNA (uracil(1939)-C(5))-methyltransferase RlmD from Aliivibrio salmonicida (strain LFI1238) (Vibrio salmonicida (strain LFI1238)).